Reading from the N-terminus, the 470-residue chain is Isocitrate dehydrogenase (NAD(+)), mitochondrial (470 aa).

Residues 1–26 (MTRVERGRVLARAIERAVAHRASARR) constitute a mitochondrion transit peptide. NAD(+) is bound by residues 138–140 (TVT) and asparagine 159. D-threo-isocitrate contacts are provided by residues 157 to 163 (SPNGAMR), arginine 193, tyrosine 200, lysine 275, and aspartate 319. Residue aspartate 319 coordinates Mg(2+). Residue lysine 324 participates in NAD(+) binding. Aspartate 343 is a D-threo-isocitrate binding site. Positions 343 and 347 each coordinate Mg(2+). Residues 380 to 385 (HGTVAD) and asparagine 399 contribute to the NAD(+) site.

The protein belongs to the isocitrate and isopropylmalate dehydrogenases family. As to quaternary structure, forms homodimers. Requires Mg(2+) as cofactor. The cofactor is Mn(2+).

The protein resides in the mitochondrion. It carries out the reaction D-threo-isocitrate + NAD(+) = 2-oxoglutarate + CO2 + NADH. The homodimer exhibits allosteric regulation by isocitrate. Functionally, performs an essential role in the oxidative function of the tricarboxylic acid cycle and respiration. Catalyzes the decarboxylation of isocitrate to produce 2-oxoglutarate and generate NADH to provide electrons for energy production. The polypeptide is Isocitrate dehydrogenase (NAD(+)), mitochondrial (Ostreococcus tauri).